A 216-amino-acid chain; its full sequence is Co-chaperone protein SBA1 (216 aa).

The residue at position 2 (serine 2) is an N-acetylserine. Positions 5 to 108 constitute a CS domain; sequence VINPQVAWAQ…LESEYWPRLT (104 aa). Repeats lie at residues 141–156 and 160–174; these read AQGMDFSQMMGGAGGA and GGMDFSQMMGGAGGA. The disordered stretch occupies residues 169 to 216; it reads GGAGGAGSPDMAQLQQLLAQSGGNLDMGDFKENDEEDEEEEIEPEVKA. Acidic residues predominate over residues 200–216; that stretch reads ENDEEDEEEEIEPEVKA.

It belongs to the p23/wos2 family. In terms of assembly, interacts with HSP82.

Acts as a co-chaperone. The polypeptide is Co-chaperone protein SBA1 (SBA1) (Saccharomyces cerevisiae (strain ATCC 204508 / S288c) (Baker's yeast)).